The primary structure comprises 257 residues: Phosphonates import ATP-binding protein PhnC (257 aa).

Residues 4–248 (IKFKNVSKVY…VFSKIYGRTI (245 aa)) enclose the ABC transporter domain. 37–44 (GLSGAGKS) contributes to the ATP binding site.

It belongs to the ABC transporter superfamily. Phosphonates importer (TC 3.A.1.9.1) family. In terms of assembly, the complex is composed of two ATP-binding proteins (PhnC), two transmembrane proteins (PhnE) and a solute-binding protein (PhnD).

Its subcellular location is the cell membrane. It catalyses the reaction phosphonate(out) + ATP + H2O = phosphonate(in) + ADP + phosphate + H(+). Its function is as follows. Part of the ABC transporter complex PhnCDE involved in phosphonates import. Responsible for energy coupling to the transport system. The chain is Phosphonates import ATP-binding protein PhnC from Staphylococcus aureus (strain MRSA252).